The following is a 546-amino-acid chain: Beta-amylase (546 aa).

Positions 1 to 30 are cleaved as a signal peptide; it reads MKNQFQYCCIVILSVVMLFVSLLIPQASSA. Residue aspartate 79 participates in substrate binding. Ca(2+) is bound by residues glutamate 86, aspartate 90, and glutamine 91. Substrate is bound by residues histidine 119 and aspartate 127. An intrachain disulfide couples cysteine 121 to cysteine 129. Positions 171 and 174 each coordinate Ca(2+). Glutamate 202 functions as the Proton donor in the catalytic mechanism. Substrate contacts are provided by lysine 317, histidine 322, and threonine 360. Residue glutamate 397 is the Proton acceptor of the active site. Substrate contacts are provided by residues 398–399 and arginine 427; that span reads NA. A CBM20 domain is found at 444–546; that stretch reads LLGVTPVMQT…LKTTSHTSSW (103 aa).

It belongs to the glycosyl hydrolase 14 family. In terms of assembly, monomer. Ca(2+) serves as cofactor.

It carries out the reaction Hydrolysis of (1-&gt;4)-alpha-D-glucosidic linkages in polysaccharides so as to remove successive maltose units from the non-reducing ends of the chains.. The polypeptide is Beta-amylase (spoII) (Bacillus cereus).